The sequence spans 142 residues: NTF2-related export protein 2 (142 aa).

The 120-residue stretch at 17–136 folds into the NTF2 domain; that stretch reads AAEEFVNIYY…WKIASDCFRF (120 aa).

As to quaternary structure, associates with NXF1, NXF2, NXF3 and NXF5.

The protein localises to the nucleus. The protein resides in the cytoplasm. Its function is as follows. Regulator of protein export for NES-containing proteins. Also plays a role in mRNA nuclear export. This chain is NTF2-related export protein 2 (NXT2), found in Bos taurus (Bovine).